Consider the following 191-residue polypeptide: Putative glutathione-dependent formaldehyde-activating enzyme (191 aa).

The CENP-V/GFA domain occupies 20–166 (FAGGNLYCKC…FKAVGLETYD (147 aa)). Zn(2+) contacts are provided by Cys-27, Cys-29, Cys-48, Cys-50, Cys-53, Cys-95, and Cys-98.

Belongs to the Gfa family. The cofactor is Zn(2+).

It catalyses the reaction S-(hydroxymethyl)glutathione = glutathione + formaldehyde. Its pathway is one-carbon metabolism; formaldehyde degradation; formate from formaldehyde (glutathione route): step 1/3. In terms of biological role, catalyzes the condensation of formaldehyde and glutathione to S-hydroxymethylglutathione. The sequence is that of Putative glutathione-dependent formaldehyde-activating enzyme from Aspergillus terreus (strain NIH 2624 / FGSC A1156).